The chain runs to 452 residues: MVGRMLSSPEPTLSTMAMSAAHGEDSPYFAGWRAYDEDPYDPITNPQGVIQMGLAENQVSFDLLEEYMREHPEASDCGAGVRENALFQDYHGLKSFRKAMASFMETIRGGKARFDPDRVVLTAGATAANELLTFILADPGDALLVPTPYYPGFDRDLRWRTGVNIVPVSCDSAAGFQVTAGALRAAYDEAVAAGTRVRGVLITNPSNPLGTTAARGVLEGILDFVARHDMHLISDEIYSGSVFAAPDLVSVAELVDERRRARGGAADAEDIARRVHVVYSLSKDLGLPGFRVGVVYSYNDAVVAAARRMSSFTLVSSQTQRTLAAMLSDAAFAAAYVRSNRDRLRERHARAVAGLRRAGVACLRGANAGLFVWVDMRRLLGDGEATVAGELRLWRRVVAEAKLNISPGSSCHCREPGWFRVCFANMSLETLDVALHRLGCFIKKWEQEQHEN.

Residue K283 is modified to N6-(pyridoxal phosphate)lysine.

This sequence belongs to the class-I pyridoxal-phosphate-dependent aminotransferase family. Pyridoxal 5'-phosphate is required as a cofactor. As to expression, expressed in leaves. Expressed in roots and leaf blades. Expressed at low levels in leaf sheaths and shoot bases.

The catalysed reaction is S-adenosyl-L-methionine = 1-aminocyclopropane-1-carboxylate + S-methyl-5'-thioadenosine + H(+). It participates in alkene biosynthesis; ethylene biosynthesis via S-adenosyl-L-methionine; ethylene from S-adenosyl-L-methionine: step 1/2. Catalyzes the formation of 1-aminocyclopropane-1-carboxylate, a direct precursor of ethylene in higher plants. This Oryza sativa subsp. japonica (Rice) protein is 1-aminocyclopropane-1-carboxylate synthase 3.